Consider the following 258-residue polypeptide: Probable glycerol uptake facilitator protein (258 aa).

Helical transmembrane passes span 11-31 and 50-70; these read WWFL…NGAV and TVAL…NAIF. An NPA 1 motif is present at residues 77 to 79; it reads NPA. 3 consecutive transmembrane segments (helical) span residues 95 to 115, 152 to 172, and 180 to 200; these read ALIW…AMIA, FLTE…ASHF, and VPPG…FGGA. The NPA 2 signature appears at 206-208; that stretch reads NPA. The chain crosses the membrane as a helical span at residues 233–253; sequence WIPVIAPLSAGLVLSIIIGFS.

Belongs to the MIP/aquaporin (TC 1.A.8) family.

The protein localises to the cell membrane. The enzyme catalyses glycerol(in) = glycerol(out). In terms of biological role, mediates glycerol diffusion across the cytoplasmic membrane via a pore-type mechanism. The sequence is that of Probable glycerol uptake facilitator protein (glpF) from Mycoplasma genitalium (strain ATCC 33530 / DSM 19775 / NCTC 10195 / G37) (Mycoplasmoides genitalium).